The primary structure comprises 107 residues: Large ribosomal subunit protein uL24 (107 aa).

Belongs to the universal ribosomal protein uL24 family. In terms of assembly, part of the 50S ribosomal subunit.

In terms of biological role, one of two assembly initiator proteins, it binds directly to the 5'-end of the 23S rRNA, where it nucleates assembly of the 50S subunit. Functionally, one of the proteins that surrounds the polypeptide exit tunnel on the outside of the subunit. The sequence is that of Large ribosomal subunit protein uL24 from Gluconacetobacter diazotrophicus (strain ATCC 49037 / DSM 5601 / CCUG 37298 / CIP 103539 / LMG 7603 / PAl5).